Reading from the N-terminus, the 1434-residue chain is Probable ATP-dependent RNA helicase spindle-E (1434 aa).

Residues 126 to 295 enclose the Helicase ATP-binding domain; that stretch reads INAINENPVV…FANESSAPPV (170 aa). 139–146 serves as a coordination point for ATP; the sequence is GETGCGKT. The short motif at 241–244 is the DEAH box element; the sequence is DEVH. The Helicase C-terminal domain maps to 356 to 527; it reads TGKSYNQSLR…NCVLKAKELK (172 aa). One can recognise a Tudor domain in the interval 936–999; sequence AGAITKGLML…RLMSQDLLRH (64 aa).

It belongs to the DEAD box helicase family. DEAH subfamily.

The protein resides in the cytoplasm. It carries out the reaction ATP + H2O = ADP + phosphate + H(+). Probable ATP-binding RNA helicase which plays a central role during spermatogenesis and oogenesis by repressing transposable elements and preventing their mobilization, which is essential for the germline integrity. Acts via the piRNA metabolic process, which mediates the repression of transposable elements during meiosis by forming complexes composed of piRNAs and Piwi and govern the methylation and subsequent repression of transposons. Involved in the repression of LTR retrotransposon copia. Also involved in telomere regulation by repressing specialized telomeric retroelements HeT-A, TAHRE, and TART; Drosophila telomeres being maintained by transposition of specialized telomeric retroelements. Involved in telomeric trans-silencing, a repression mechanism by which a transposon or a transgene inserted in subtelomeric heterochromatin has the capacity to repress in trans in the female germline, a homologous transposon, or transgene located in euchromatin. Involved in the repression of testis-expressed Stellate genes by the homologous Su(Ste) repeats. Required for anteroposterior and dorsoventral axis formation during oogenesis. The chain is Probable ATP-dependent RNA helicase spindle-E (spn-E) from Drosophila persimilis (Fruit fly).